The chain runs to 346 residues: Cell division protein FtsZ 2 (346 aa).

Residues 23–27, 110–112, Glu-141, Arg-145, and Asp-189 contribute to the GTP site; these read GGGGN and GTG. The disordered stretch occupies residues 320-346; it reads SNRSAQPTAPEAMNGQTAAAVPSRTLQ.

It belongs to the FtsZ family. As to quaternary structure, homodimer. Polymerizes to form a dynamic ring structure in a strictly GTP-dependent manner. Interacts directly with several other division proteins.

Its subcellular location is the cytoplasm. Its function is as follows. Essential cell division protein that forms a contractile ring structure (Z ring) at the future cell division site. The regulation of the ring assembly controls the timing and the location of cell division. One of the functions of the FtsZ ring is to recruit other cell division proteins to the septum to produce a new cell wall between the dividing cells. Binds GTP and shows GTPase activity. This chain is Cell division protein FtsZ 2, found in Rhizobium meliloti (strain 1021) (Ensifer meliloti).